We begin with the raw amino-acid sequence, 224 residues long: MECSFGITGKDYVILASDMGAGRSIVRMKSDENKLKTLGPHLAMAFSGEPGDTNNFAEYIERNMRLYNIRNHFPLLPPAASAWVRRTLAEAIRSRHPYAVNLLLGGFDTTTSKPHLYWIDYLGTKAIVPYAAHGMGVYVSLSTMDKWWYEDMDKKEGVDLLRKCIDETEKRLTIKFDFNCILIDKNGIHKVDLSQADPIANIQEHPQETEVEAPHPPIEVGISA.

Belongs to the peptidase T1B family. The 26S proteasome consists of a 20S proteasome core and two 19S regulatory subunits. The 20S proteasome core is composed of 28 subunits that are arranged in four stacked rings, resulting in a barrel-shaped structure. The two end rings are each formed by seven alpha subunits, and the two central rings are each formed by seven beta subunits. The catalytic chamber with the active sites is on the inside of the barrel.

It localises to the cytoplasm. The protein localises to the nucleus. Its function is as follows. Non-catalytic component of the proteasome, a multicatalytic proteinase complex which is characterized by its ability to cleave peptides with Arg, Phe, Tyr, Leu, and Glu adjacent to the leaving group at neutral or slightly basic pH. The proteasome has an ATP-dependent proteolytic activity. In Cryptococcus neoformans var. neoformans serotype D (strain B-3501A) (Filobasidiella neoformans), this protein is Probable proteasome subunit beta type-4 (CPR1).